Reading from the N-terminus, the 310-residue chain is Malate dehydrogenase (310 aa).

Residues 7–12 (GAGNVG) and Asp32 contribute to the NAD(+) site. Substrate-binding residues include Arg81 and Arg87. NAD(+) is bound by residues Asn94 and 117–119 (VSN). Asn119 and Arg150 together coordinate substrate. Residue His174 is the Proton acceptor of the active site.

The protein belongs to the LDH/MDH superfamily. MDH type 3 family.

It carries out the reaction (S)-malate + NAD(+) = oxaloacetate + NADH + H(+). Its function is as follows. Catalyzes the reversible oxidation of malate to oxaloacetate. The polypeptide is Malate dehydrogenase (Chlorobium phaeobacteroides (strain DSM 266 / SMG 266 / 2430)).